The sequence spans 37 residues: Large ribosomal subunit protein bL36 (37 aa).

The protein belongs to the bacterial ribosomal protein bL36 family.

The protein is Large ribosomal subunit protein bL36 of Rhodococcus erythropolis (strain PR4 / NBRC 100887).